Here is a 554-residue protein sequence, read N- to C-terminus: MAATGYPVLILKEGTQRTYGREALRANILAARVLAEMLKSSLGPRGLDKMLVDAFGDITVTNDGATIVKEMEIQHPAAKLLVEVAKAQDAEVGDGTTSVVVLAGALLEKAEKLLDENLHPTIIIEGYTKAMEEALRLVDEAAVPVEVEDDSVLRRIAETTLASKFVGTGPERDKIISMVIDAIRTVAEKRPDGGYEVDLDYVKIEKKKGGSLLDSKLVRGIVLDKEVVHPAMPKRVENAKILVLDAPLEVQKPELTTKIRVTDIEKLESFLEEETRMLRDMVEKIAATGANVVITQKGIDEVAQHFLAKKGILAVRRVKRSDIEKVAKATGAKIVTSLRDLKPEYLGYAELVEERKVGEDKMVFIEGAKNPKSVTILLRGANDMLLDEAERNIKDALHGLRNILREPKIVGGGGAVEVELALKLKEFARTVGGKQQLAIEAYAEALETIPTVLAESAGMDALEALLKLRSLHSQGYKFAGVNVLEGKIEEDMTKINVYEPVLVKKQVIKSASEAAISILKIDDVIAAAPPKKKEKKGKTGEEEEEEGGGSKFEF.

The interval 530 to 554 (PKKKEKKGKTGEEEEEEGGGSKFEF) is disordered.

Belongs to the TCP-1 chaperonin family. As to quaternary structure, forms a Heterooligomeric complex of two stacked eight-membered rings.

Its function is as follows. Molecular chaperone; binds unfolded polypeptides in vitro, and has a weak ATPase activity. In Aeropyrum pernix (strain ATCC 700893 / DSM 11879 / JCM 9820 / NBRC 100138 / K1), this protein is Thermosome subunit alpha (thsA).